A 100-amino-acid polypeptide reads, in one-letter code: Large ribosomal subunit protein uL23 (100 aa).

The protein belongs to the universal ribosomal protein uL23 family. Part of the 50S ribosomal subunit. Contacts protein L29, and trigger factor when it is bound to the ribosome.

In terms of biological role, one of the early assembly proteins it binds 23S rRNA. One of the proteins that surrounds the polypeptide exit tunnel on the outside of the ribosome. Forms the main docking site for trigger factor binding to the ribosome. The polypeptide is Large ribosomal subunit protein uL23 (Vibrio cholerae serotype O1 (strain ATCC 39541 / Classical Ogawa 395 / O395)).